A 91-amino-acid polypeptide reads, in one-letter code: Mercuric transport protein periplasmic component (91 aa).

Residues 1 to 19 form the signal peptide; it reads MKKLFASLALAAVVAPVWA. The HMA domain maps to 22-88; that stretch reads QTVTLSVPGM…ATADAGYPSS (67 aa). Hg(2+) is bound by residues cysteine 33 and cysteine 36.

This sequence belongs to the MerP family. As to quaternary structure, monomer.

It localises to the periplasm. Its function is as follows. Involved in mercury resistance. Acts as a mercury scavenger that specifically binds to a mercuric ion in the periplasm and probably passes it to the cytoplasmic mercuric reductase MerA via the mercuric transport protein MerT. This Pseudomonas aeruginosa protein is Mercuric transport protein periplasmic component.